Reading from the N-terminus, the 271-residue chain is Putative pyruvate, phosphate dikinase regulatory protein (271 aa).

Residue 150–157 (GVSRTSKT) coordinates ADP.

It belongs to the pyruvate, phosphate/water dikinase regulatory protein family. PDRP subfamily.

The catalysed reaction is N(tele)-phospho-L-histidyl/L-threonyl-[pyruvate, phosphate dikinase] + ADP = N(tele)-phospho-L-histidyl/O-phospho-L-threonyl-[pyruvate, phosphate dikinase] + AMP + H(+). It carries out the reaction N(tele)-phospho-L-histidyl/O-phospho-L-threonyl-[pyruvate, phosphate dikinase] + phosphate + H(+) = N(tele)-phospho-L-histidyl/L-threonyl-[pyruvate, phosphate dikinase] + diphosphate. Its function is as follows. Bifunctional serine/threonine kinase and phosphorylase involved in the regulation of the pyruvate, phosphate dikinase (PPDK) by catalyzing its phosphorylation/dephosphorylation. The polypeptide is Putative pyruvate, phosphate dikinase regulatory protein (Oceanobacillus iheyensis (strain DSM 14371 / CIP 107618 / JCM 11309 / KCTC 3954 / HTE831)).